Consider the following 101-residue polypeptide: NAD(P)H-quinone oxidoreductase subunit 4L (101 aa).

3 consecutive transmembrane segments (helical) span residues 3–23, 30–50, and 64–84; these read LRYF…GLIT, VLMS…AFSN, and VFVI…VLAI.

The protein belongs to the complex I subunit 4L family. NDH-1 can be composed of about 15 different subunits; different subcomplexes with different compositions have been identified which probably have different functions.

The protein resides in the cellular thylakoid membrane. The enzyme catalyses a plastoquinone + NADH + (n+1) H(+)(in) = a plastoquinol + NAD(+) + n H(+)(out). It carries out the reaction a plastoquinone + NADPH + (n+1) H(+)(in) = a plastoquinol + NADP(+) + n H(+)(out). Its function is as follows. NDH-1 shuttles electrons from an unknown electron donor, via FMN and iron-sulfur (Fe-S) centers, to quinones in the respiratory and/or the photosynthetic chain. The immediate electron acceptor for the enzyme in this species is believed to be plastoquinone. Couples the redox reaction to proton translocation, and thus conserves the redox energy in a proton gradient. Cyanobacterial NDH-1 also plays a role in inorganic carbon-concentration. The chain is NAD(P)H-quinone oxidoreductase subunit 4L from Nostoc sp. (strain PCC 7120 / SAG 25.82 / UTEX 2576).